The chain runs to 122 residues: Small ribosomal subunit protein uS13 (122 aa).

A disordered region spans residues P97 to K122.

This sequence belongs to the universal ribosomal protein uS13 family. Part of the 30S ribosomal subunit. Forms a loose heterodimer with protein S19. Forms two bridges to the 50S subunit in the 70S ribosome.

Its function is as follows. Located at the top of the head of the 30S subunit, it contacts several helices of the 16S rRNA. In the 70S ribosome it contacts the 23S rRNA (bridge B1a) and protein L5 of the 50S subunit (bridge B1b), connecting the 2 subunits; these bridges are implicated in subunit movement. Contacts the tRNAs in the A and P-sites. This Pelobacter propionicus (strain DSM 2379 / NBRC 103807 / OttBd1) protein is Small ribosomal subunit protein uS13.